The chain runs to 416 residues: Serine/threonine-protein kinase 26 (416 aa).

Residue Ala2 is modified to N-acetylalanine. Position 4 is a phosphoserine (Ser4). A Protein kinase domain is found at 24 to 274 (FTKLERIGKG…AKELLKHKFI (251 aa)). Residues 30–38 (IGKGSFGEV) and Lys53 contribute to the ATP site. Asp144 functions as the Proton acceptor in the catalytic mechanism. At Thr178 the chain carries Phosphothreonine; by autocatalysis. The disordered stretch occupies residues 296–343 (AEGHSDEESDSEGSDSESSSRESNPHPEWSFTTVRKKPDPKKLQNGEE). Phosphoserine occurs at positions 300, 304, 306, 309, and 325. A phosphothreonine mark is found at Thr327 and Thr328. Residues 331-340 (KKPDPKKLQN) show a composition bias toward basic and acidic residues.

The protein belongs to the protein kinase superfamily. STE Ser/Thr protein kinase family. STE20 subfamily. Homodimer. Interacts with PDCD10. Interacts with GOLGA2. Interacts with CTTNBP2NL. Interacts with RIPOR1 (via C-terminus); this interaction occurs in a PDCD10-dependent and Rho-independent manner. Interacts with PDCD10; this interaction is required for the association of STK26 with RIPOR1. Part of the core of STRIPAK complexes composed of PP2A catalytic and scaffolding subunits, the striatins (PP2A regulatory subunits), the striatin-associated proteins MOB4, STRIP1 and STRIP2, PDCD10 and members of the STE20 kinases, such as STK24 and STK26. It depends on Mg(2+) as a cofactor.

Its subcellular location is the cytoplasm. The protein localises to the golgi apparatus. The enzyme catalyses L-seryl-[protein] + ATP = O-phospho-L-seryl-[protein] + ADP + H(+). The catalysed reaction is L-threonyl-[protein] + ATP = O-phospho-L-threonyl-[protein] + ADP + H(+). Interaction with Golgi matrix protein GOLGA2 leads to autophosphorylation on Thr-178, possibly as a consequence of stabilization of dimer formation. May also be activated by C-terminal cleavage. Functionally, serine/threonine-protein kinase that acts as a mediator of cell growth. Modulates apoptosis. In association with STK24 negatively regulates Golgi reorientation in polarized cell migration upon RHO activation. Phosphorylates ATG4B at 'Ser-383', thereby increasing autophagic flux. Part of the striatin-interacting phosphatase and kinase (STRIPAK) complexes. STRIPAK complexes have critical roles in protein (de)phosphorylation and are regulators of multiple signaling pathways including Hippo, MAPK, nuclear receptor and cytoskeleton remodeling. Different types of STRIPAK complexes are involved in a variety of biological processes such as cell growth, differentiation, apoptosis, metabolism and immune regulation. The chain is Serine/threonine-protein kinase 26 from Mus musculus (Mouse).